We begin with the raw amino-acid sequence, 908 residues long: AdoMet-dependent rRNA methyltransferase SPB1 (908 aa).

S-adenosyl-L-methionine-binding residues include Gly-57, Trp-59, Asp-77, Asp-93, and Asp-118. The active-site Proton acceptor is the Lys-158. A coiled-coil region spans residues 378–422 (MDEEEQITEELQKLQQAKLAKTKRERKRANEKKARELLKLQLNMT). Disordered stretches follow at residues 440–513 (IFDL…YDSY), 535–715 (NFDA…DEVK), and 806–841 (AKGR…EKAR). Acidic residues predominate over residues 464–493 (DDGEGMDLASESEEEEDEDEEDDEVLDSDE). A compositionally biased stretch (basic and acidic residues) spans 535-545 (NFDAWHGIQEK). Composition is skewed to acidic residues over residues 546-564 (SDEE…EEGG) and 579-591 (DSSD…EPET). Basic and acidic residues predominate over residues 592 to 610 (EVPKKIKKVSFEKPARSEK). Composition is skewed to acidic residues over residues 650–678 (DGDD…EDAS) and 685–712 (EGDD…EDQD). Residues 816-827 (ARMEKAKKKADG) are compositionally biased toward basic and acidic residues.

Belongs to the class I-like SAM-binding methyltransferase superfamily. RNA methyltransferase RlmE family. SPB1 subfamily. In terms of assembly, component of the nucleolar and nucleoplasmic pre-60S ribosomal particle.

The protein localises to the nucleus. It localises to the nucleolus. The enzyme catalyses a ribonucleotide in rRNA + S-adenosyl-L-methionine = a 2'-O-methylribonucleotide in rRNA + S-adenosyl-L-homocysteine + H(+). Its function is as follows. Required for proper assembly of pre-ribosomal particles during the biogenesis of the 60S ribosomal subunit. The sequence is that of AdoMet-dependent rRNA methyltransferase SPB1 from Cryptococcus neoformans var. neoformans serotype D (strain B-3501A) (Filobasidiella neoformans).